A 99-amino-acid chain; its full sequence is DNA-binding protein HmvA (99 aa).

The tract at residues 52–55 is interaction with DNA; the sequence is KTIK.

It belongs to the archaeal histone HMF family. In terms of assembly, homodimer or heterodimer with another histone. Dimers then assemble into higher oligomers, with the DNA wrapped around the protein core.

Its subcellular location is the cytoplasm. The protein resides in the chromosome. Functionally, binds and compact DNA (95 to 150 base pairs) to form nucleosome-like structures that contain positive DNA supercoils. Increases the resistance of DNA to thermal denaturation (in vitro). The sequence is that of DNA-binding protein HmvA (hmvA) from Methanococcus voltae.